The primary structure comprises 91 residues: Large ribosomal subunit protein bL27 (91 aa).

Residues 1–22 form a disordered region; that stretch reads MAHKKAGGSSRNGRDSDGRRLG.

This sequence belongs to the bacterial ribosomal protein bL27 family.

In Beijerinckia indica subsp. indica (strain ATCC 9039 / DSM 1715 / NCIMB 8712), this protein is Large ribosomal subunit protein bL27.